A 204-amino-acid chain; its full sequence is Large ribosomal subunit protein eL15 (204 aa).

Residue Gly-2 is the site of N-myristoyl glycine attachment. Ser-34 carries the post-translational modification Phosphoserine. Residue Lys-83 forms a Glycyl lysine isopeptide (Lys-Gly) (interchain with G-Cter in SUMO2) linkage. Phosphoserine occurs at positions 97 and 100. The interval 165–186 (TSAGRKSRGLGKGHKFHHTIGG) is disordered. The segment covering 169 to 182 (RKSRGLGKGHKFHH) has biased composition (basic residues).

This sequence belongs to the eukaryotic ribosomal protein eL15 family. As to quaternary structure, component of the large ribosomal subunit. Interacts with IFIT1 (via TPR repeats 1-4).

Its subcellular location is the cytoplasm. Functionally, component of the large ribosomal subunit. The ribosome is a large ribonucleoprotein complex responsible for the synthesis of proteins in the cell. The chain is Large ribosomal subunit protein eL15 (RPL15) from Bos taurus (Bovine).